The following is a 312-amino-acid chain: MRNGTVITEFILLGFPVIQGLQTPLFIAIFLTYILTLAGNGLIIATVWAEPRLQIPMYFFLCNLSFLEIWYTTTVIPKLLGTFVVARTVICMSCCLLQAFFHFFVGTTEFLILTIMSFDRYLTICNPLHHPTIMTSKLCLQLALSSWVVGFTIVFCQTMLLIQLPFCGNNVISHFYCDVGPSLKAACIDTSILELLGVIATILVIPGSLLFNMISYIYILSAILRIPSATGHQKTFSTCASHLTVVSLLYGAVLFMYLRPTAHSSFKINKVVSVLNTILTPLLNPFIYTIRNKEVKGALRKAMTCPKTGHAK.

The Extracellular portion of the chain corresponds to 1 to 23 (MRNGTVITEFILLGFPVIQGLQT). N3 carries an N-linked (GlcNAc...) asparagine glycan. Residues 24–44 (PLFIAIFLTYILTLAGNGLII) traverse the membrane as a helical segment. At 45–52 (ATVWAEPR) the chain is on the cytoplasmic side. A helical transmembrane segment spans residues 53–73 (LQIPMYFFLCNLSFLEIWYTT). Residues 74-97 (TVIPKLLGTFVVARTVICMSCCLL) lie on the Extracellular side of the membrane. A disulfide bridge connects residues C95 and C187. The chain crosses the membrane as a helical span at residues 98–118 (QAFFHFFVGTTEFLILTIMSF). Over 119–137 (DRYLTICNPLHHPTIMTSK) the chain is Cytoplasmic. A helical transmembrane segment spans residues 138–158 (LCLQLALSSWVVGFTIVFCQT). Residues 159–195 (MLLIQLPFCGNNVISHFYCDVGPSLKAACIDTSILEL) are Extracellular-facing. The chain crosses the membrane as a helical span at residues 196–215 (LGVIATILVIPGSLLFNMIS). Topologically, residues 216–235 (YIYILSAILRIPSATGHQKT) are cytoplasmic. Residues 236–256 (FSTCASHLTVVSLLYGAVLFM) traverse the membrane as a helical segment. At 257 to 269 (YLRPTAHSSFKIN) the chain is on the extracellular side. Residues 270–290 (KVVSVLNTILTPLLNPFIYTI) traverse the membrane as a helical segment. The Cytoplasmic segment spans residues 291–312 (RNKEVKGALRKAMTCPKTGHAK).

Belongs to the G-protein coupled receptor 1 family.

The protein localises to the cell membrane. Its function is as follows. Odorant receptor. The polypeptide is Olfactory receptor 6X1 (OR6X1) (Homo sapiens (Human)).